The primary structure comprises 475 residues: Beta-amyrin 28-monooxygenase (475 aa).

A helical transmembrane segment spans residues 2–22; sequence YLTILFLFVSSILLSLMFLLR. Position 422 (Cys-422) interacts with heme.

This sequence belongs to the cytochrome P450 family. Requires heme as cofactor.

The protein localises to the membrane. The catalysed reaction is beta-amyrin + 3 reduced [NADPH--hemoprotein reductase] + 3 O2 = oleanolate + 3 oxidized [NADPH--hemoprotein reductase] + 4 H2O + 4 H(+). In terms of biological role, catalyzes the oxidation of the methyl group to a carboxyl group at the C-28 position of beta-amyrin to form oleanolate. The chain is Beta-amyrin 28-monooxygenase from Barbarea vulgaris (Yellow rocket).